Here is a 113-residue protein sequence, read N- to C-terminus: Putative increased recombination centers protein 14 (113 aa).

This is Putative increased recombination centers protein 14 (IRC14) from Saccharomyces cerevisiae (strain ATCC 204508 / S288c) (Baker's yeast).